A 143-amino-acid chain; its full sequence is Putative phosphotransferase IIA component SgcA (143 aa).

A PTS EIIA type-2 domain is found at 1-143 (MINDIKWVQA…DDALFALVSG (143 aa)). The active-site Tele-phosphohistidine intermediate is the His63.

Its subcellular location is the cytoplasm. Functionally, the phosphoenolpyruvate-dependent sugar phosphotransferase system (sugar PTS), a major carbohydrate active -transport system, catalyzes the phosphorylation of incoming sugar substrates concomitantly with their translocation across the cell membrane. The protein is Putative phosphotransferase IIA component SgcA (sgcA) of Escherichia coli (strain K12).